A 1481-amino-acid polypeptide reads, in one-letter code: Cystic fibrosis transmembrane conductance regulator (1481 aa).

Over 1-77 (MQKSPLVKAS…KLINALRRCF (77 aa)) the chain is Cytoplasmic. Residues 78–98 (LWRFIFYGILLYLGEVTKAVQ) traverse the membrane as a helical segment. Residues 81–365 (FIFYGILLYL…GAVQTWYDSL (285 aa)) form the ABC transmembrane type-1 1 domain. Over 99 to 122 (PLLLGRIIASYDPDNKEERSIAIY) the chain is Extracellular. A helical membrane pass occupies residues 123 to 146 (LAIGLCLLFIVRTLLLHPAIFGLQ). The Cytoplasmic portion of the chain corresponds to 147–195 (HIGMQMRIAMFSLIYKKTLKLSSRVLDKISIGQLVSLLSNNLNKFDEGL). A helical membrane pass occupies residues 196 to 216 (ALAHFVWIAPLQVTLLMGLLW). The Extracellular portion of the chain corresponds to 217–222 (DLLQAS). The helical transmembrane segment at 223 to 243 (AFCGLAVLIVLALFQAWLGKM) threads the bilayer. At 244 to 298 (MMKYRDQRAGKINERLVITSEMIENIQSVKAYCWEEAMEKMIENLRQTELKLTRK) the chain is on the cytoplasmic side. The chain crosses the membrane as a helical span at residues 299–319 (AAYMRYFNSAAFFFSGFFVVF). The Extracellular portion of the chain corresponds to 320-339 (LSVLPYAFLQGIILRKIFTT). The helical transmembrane segment at 340 to 358 (ISFCIVLRMAITRQFPGAV) threads the bilayer. At 359–859 (QTWYDSLGAI…YLRYITVHKS (501 aa)) the chain is on the cytoplasmic side. ATP is bound by residues W401, S435, 459 to 466 (GSTGAGKT), and Q494. In terms of domain architecture, ABC transporter 1 spans 424 to 647 (NGDNKLFFSN…RPDFSSKLMG (224 aa)). A lipid anchor (S-palmitoyl cysteine) is attached at C525. The residue at position 550 (S550) is a Phosphoserine. A disordered R region region spans residues 655-832 (SAERRNSILT…EEINEEDLKE (178 aa)). Phosphoserine; by PKA is present on residues S661 and S671. S687 carries the post-translational modification Phosphoserine; by PKC. K689 is covalently cross-linked (Glycyl lysine isopeptide (Lys-Gly) (interchain with G-Cter in ubiquitin)). 2 positions are modified to phosphoserine; by PKA: S701 and S713. Position 718 is a phosphothreonine (T718). Phosphoserine; by PKA is present on residues S738, S769, S796, and S814. The chain crosses the membrane as a helical span at residues 860–880 (LILVLIWCLIIFLAEVAASLV). The ABC transmembrane type-1 2 domain occupies 860-1156 (LILVLIWCLI…AVNSSIDVDS (297 aa)). Residues 881–919 (VLWLLKNNTPQQEMNSTQSGNRSYPVIITNTSFYYIFYI) are Extracellular-facing. N-linked (GlcNAc...) asparagine glycans are attached at residues N895 and N901. The chain crosses the membrane as a discontinuously helical span at residues 920–940 (YVGVADTLLALGLFRGLPLVH). The Cytoplasmic segment spans residues 941 to 991 (TLITVSKILHHKMLRSVLQAPMSTLNALKAGGILNRFSKDIAILDDLLPLT). A helical membrane pass occupies residues 992-1012 (IFDFIQLLLIVIGAIAVVSVL). The Extracellular portion of the chain corresponds to 1013–1014 (QP). Residues 1015–1035 (YIFLATVPVIAAFIMLRAYFL) form a helical membrane-spanning segment. Residues 1036–1096 (HTSQQLKQLE…TANWFLYLST (61 aa)) are Cytoplasmic-facing. Residues 1097 to 1117 (LRWFQMRIEMIFVIFFIAVTF) traverse the membrane as a helical segment. Over 1118–1131 (ISILTTGEGQGSVG) the chain is Extracellular. Residues 1132-1152 (IILTLAMNIMSTLQWAVNSSI) form a helical membrane-spanning segment. Residues 1153–1481 (DVDSLMRSVS…TEEEVQETRL (329 aa)) are Cytoplasmic-facing. The 234-residue stretch at 1211–1444 (MIVKDLTAKY…KSLFRQAISS (234 aa)) folds into the ABC transporter 2 domain. Residues Y1220 and 1245–1252 (GRTGSGKS) each bind ATP. The tract at residues 1387 to 1481 (RTIKQAFADC…TEEEVQETRL (95 aa)) is interaction with GORASP2. The S-palmitoyl cysteine moiety is linked to residue C1396. Phosphoserine is present on residues S1445 and S1457. The span at 1453–1462 (HRNSSKHKSR) shows a compositional bias: basic residues. The disordered stretch occupies residues 1453–1481 (HRNSSKHKSRSQITALKEETEEEVQETRL). Acidic residues predominate over residues 1471–1481 (ETEEEVQETRL). Positions 1479–1481 (TRL) match the PDZ-binding motif.

Belongs to the ABC transporter superfamily. ABCC family. CFTR transporter (TC 3.A.1.202) subfamily. Monomer; does not require oligomerization for channel activity. May form oligomers in the membrane. Interacts with SLC26A3, SLC26A6 and NHERF1. Interacts with SHANK2. Interacts with MYO6. Interacts (via C-terminus) with GOPC (via PDZ domain); this promotes CFTR internalization and thereby decreases channel activity. Interacts with SLC4A7 through NHERF1. Found in a complex with MYO5B and RAB11A. Interacts with ANO1. Interacts with SLC26A8. Interacts with AHCYL1; the interaction increases CFTR activity. Interacts with CSE1L. The core-glycosylated form interacts with GORASP2 (via PDZ GRASP-type 1 domain) in respone to ER stress. Interacts with MARCHF2; the interaction leads to CFTR ubiqtuitination and degradation. Interacts with ADGRG2. Post-translationally, N-glycosylated. In terms of processing, phosphorylated; cAMP treatment promotes phosphorylation and activates the channel. Dephosphorylation decreases the ATPase activity (in vitro). Phosphorylation at PKA sites activates the channel. Phosphorylation at PKC sites enhances the response to phosphorylation by PKA. Phosphorylated by AMPK; this inhibits channel activity. Ubiquitinated, leading to its degradation in the lysosome. Deubiquitination by USP10 in early endosomes enhances its endocytic recycling to the cell membrane. Ubiquitinated by RNF185 during ER stress. Ubiquitinated by MARCHF2.

It is found in the apical cell membrane. It localises to the early endosome membrane. The protein resides in the cell membrane. Its subcellular location is the recycling endosome membrane. The protein localises to the endoplasmic reticulum membrane. It is found in the nucleus. The enzyme catalyses ATP + H2O + closed Cl(-) channel = ADP + phosphate + open Cl(-) channel.. It catalyses the reaction chloride(in) = chloride(out). It carries out the reaction hydrogencarbonate(in) = hydrogencarbonate(out). The catalysed reaction is ATP + H2O = ADP + phosphate + H(+). Epithelial ion channel that plays an important role in the regulation of epithelial ion and water transport and fluid homeostasis. Mediates the transport of chloride ions across the cell membrane. Possesses an intrinsic ATPase activity and utilizes ATP to gate its channel; the passive flow of anions through the channel is gated by cycles of ATP binding and hydrolysis by the ATP-binding domains. The ion channel is also permeable to HCO(3)(-); selectivity depends on the extracellular chloride concentration. Exerts its function also by modulating the activity of other ion channels and transporters. Contributes to the regulation of the pH and the ion content of the epithelial fluid layer. Modulates the activity of the epithelial sodium channel (ENaC) complex, in part by regulating the cell surface expression of the ENaC complex. May regulate bicarbonate secretion and salvage in epithelial cells by regulating the transporter SLC4A7. Can inhibit the chloride channel activity of ANO1. Plays a role in the chloride and bicarbonate homeostasis during sperm epididymal maturation and capacitation. This Cavia porcellus (Guinea pig) protein is Cystic fibrosis transmembrane conductance regulator.